The primary structure comprises 460 residues: Tubby-related protein 3 (460 aa).

2 disordered regions span residues 37–132 (KKQR…ETAP) and 151–193 (YDEE…GVTA). Positions 151–162 (YDEEPDKEEDEG) are enriched in acidic residues. Residues 166–188 (SSPSARSEESAAASQKAASETGA) show a composition bias toward low complexity.

This sequence belongs to the TUB family. As to quaternary structure, associates with the IFT complex A (IFT-A). Interacts with SIRT1. As to expression, widely expressed including eyes and adipose depots.

It is found in the nucleus. The protein localises to the cell membrane. Its subcellular location is the cell projection. The protein resides in the cilium. It localises to the cytoplasm. It is found in the secreted. Its function is as follows. Negative regulator of the Shh signaling transduction pathway: recruited to primary cilia via association with the IFT complex A (IFT-A) and is required for recruitment of G protein-coupled receptor GPR161 to cilia, a promoter of PKA-dependent basal repression machinery in Shh signaling. Binds to phosphorylated inositide (phosphoinositide) lipids. Both IFT-A- and phosphoinositide-binding properties are required to regulate ciliary G protein-coupled receptor trafficking. During adipogenesis, regulates ciliary trafficking of FFAR4 in preadipocytes. The protein is Tubby-related protein 3 of Mus musculus (Mouse).